The sequence spans 495 residues: Cobyric acid synthase (495 aa).

A GATase cobBQ-type domain is found at 249–442 (KFIVKVPVVT…LHGVFDEPEA (194 aa)). The active-site Nucleophile is C330. H434 is an active-site residue.

The protein belongs to the CobB/CobQ family. CobQ subfamily.

The protein operates within cofactor biosynthesis; adenosylcobalamin biosynthesis. Functionally, catalyzes amidations at positions B, D, E, and G on adenosylcobyrinic A,C-diamide. NH(2) groups are provided by glutamine, and one molecule of ATP is hydrogenolyzed for each amidation. The protein is Cobyric acid synthase of Aliivibrio fischeri (strain ATCC 700601 / ES114) (Vibrio fischeri).